A 151-amino-acid polypeptide reads, in one-letter code: Regulatory protein RecX (151 aa).

The protein belongs to the RecX family.

It is found in the cytoplasm. Its function is as follows. Modulates RecA activity. This chain is Regulatory protein RecX, found in Prosthecochloris aestuarii (strain DSM 271 / SK 413).